The chain runs to 295 residues: Probable WRKY transcription factor 46 (295 aa).

A DNA-binding region (WRKY) is located at residues 98-166; the sequence is QENGSIDDGH…YLGNHTCNNI (69 aa).

Belongs to the WRKY group III family. As to quaternary structure, binds to BZR2/BES1 to cooperatively regulate the expression of target genes. Phosphorylated and destabilized by ASK7/BIN2. Expressed in guard cells, hypocotyls, and in the vascular tissues of cotyledon and root. Mostly expressed in roots, at lower levels in leaves and petioles, and, to a lower extent, in stems, flowers and siliques.

It localises to the nucleus. In terms of biological role, transcription factor involved in the regulation of osmotic stress responses and stomatal movement. Interacts specifically with the W box (5'-(T)TGAC[CT]-3'), a frequently occurring elicitor-responsive cis-acting element. Positive regulator of EDS1-dependent defense against E.amylovora. Together with WRKY70 and WRKY53, promotes resistance to P.syringae, probably by enhancing salicylic acid (SA)- dependent genes. Contributes to the suppression of jasmonic acid (MeJA)-induced expression of PDF1.2. Together with WRKY54 and WRKY70, promotes brassinosteroid (BR)-regulated plant growth but prevent drought response by modulating gene expression. This Arabidopsis thaliana (Mouse-ear cress) protein is Probable WRKY transcription factor 46 (WRKY46).